Consider the following 339-residue polypeptide: Phosphoribosylformylglycinamidine cyclo-ligase (339 aa).

It belongs to the AIR synthase family.

Its subcellular location is the cytoplasm. The catalysed reaction is 2-formamido-N(1)-(5-O-phospho-beta-D-ribosyl)acetamidine + ATP = 5-amino-1-(5-phospho-beta-D-ribosyl)imidazole + ADP + phosphate + H(+). Its pathway is purine metabolism; IMP biosynthesis via de novo pathway; 5-amino-1-(5-phospho-D-ribosyl)imidazole from N(2)-formyl-N(1)-(5-phospho-D-ribosyl)glycinamide: step 2/2. The protein is Phosphoribosylformylglycinamidine cyclo-ligase of Oceanobacillus iheyensis (strain DSM 14371 / CIP 107618 / JCM 11309 / KCTC 3954 / HTE831).